The primary structure comprises 626 residues: Deoxynucleoside triphosphate triphosphohydrolase SAMHD1 (626 aa).

An N-acetylmethionine modification is found at Met1. Basic and acidic residues predominate over residues 1–19; sequence MQRADSEQPSKRPRCDDSP. A disordered region spans residues 1-36; sequence MQRADSEQPSKRPRCDDSPRTPSNTPSAEADWSPGL. Ser18 bears the Phosphoserine mark. Phosphothreonine occurs at positions 21 and 25. Ser33 and Ser93 each carry phosphoserine. The 66-residue stretch at 45-110 folds into the SAM domain; that stretch reads WGPEQVCSFL…LSYIQRLVQI (66 aa). Residues Lys116 and Val117 each coordinate GTP. Asn119 provides a ligand contact to dATP. Residue Asn119 participates in dCTP binding. DGTP is bound at residue Asn119. Asn119 contributes to the dTTP binding site. The GTP site is built by Asp137, Gln142, and Arg145. Residue Gln149 participates in dATP binding. Gln149 serves as a coordination point for dCTP. Positions 149, 150, 156, and 164 each coordinate dGTP. Gln149 is a binding site for dTTP. DATP is bound by residues Val156 and Arg164. Residues Val156 and Arg164 each contribute to the dCTP site. Residues Val156 and Arg164 each contribute to the dTTP site. Positions 164–316 constitute an HD domain; that stretch reads RFEHSLGVGY…GIDVDKWDYF (153 aa). Mn(2+) is bound by residues His167, His206, and Asp207. The dATP site is built by His210 and His215. DCTP-binding residues include His210 and His215. DTTP is bound by residues His210 and His215. Residue His233 is part of the active site. Asp311 lines the Mn(2+) pocket. The dATP site is built by Lys312, Tyr315, Asp319, Arg333, Arg352, Lys354, Asn358, and Arg366. DCTP is bound by residues Lys312, Tyr315, Asp319, Arg333, Arg352, and Lys354. Residues Lys312, Tyr315, Asp319, Arg333, Arg352, Lys354, Asn358, and Arg366 each coordinate dGTP. DTTP contacts are provided by Lys312, Tyr315, Asp319, Arg333, Arg352, and Lys354. DCTP is bound by residues Arg366 and Arg372. DGTP is bound by residues Tyr374, Gln375, His376, and Lys377. Gln375, His376, and Lys377 together coordinate dATP. Residues Gln375, His376, and Lys377 each coordinate dCTP. DTTP is bound by residues Gln375, His376, and Lys377. Arg451 and Lys455 together coordinate GTP. Glycyl lysine isopeptide (Lys-Gly) (interchain with G-Cter in SUMO2) cross-links involve residues Lys467, Lys469, and Lys492. Lys523 serves as a coordination point for GTP. Lys523 serves as a coordination point for dATP. Lys523 contacts dCTP. Lys523 provides a ligand contact to dGTP. Lys523 lines the dTTP pocket. Thr592 bears the (Microbial infection) Phosphothreonine mark. A Phosphothreonine; by CDK1 modification is found at Thr592. Residue Lys622 forms a Glycyl lysine isopeptide (Lys-Gly) (interchain with G-Cter in SUMO2) linkage.

The protein belongs to the SAMHD1 family. As to quaternary structure, homodimer; in absence of GTP and dNTP. Homotetramer; in GTP- and dNTP-bound form. Interacts with MRE11; leading to stimulate the exonuclease activity of MRE11. Interacts with RBBP8/CtIP. Interacts (via its C-terminus) with CD81. In terms of assembly, (Microbial infection) Interacts with HIV-2 viral protein Vpx; promoting interaction with a E3 ubiquitin-protein ligase complex containing DCAF1, leading to subsequent ubiquitination and degradation of SAMHD1. Mn(2+) serves as cofactor. Phosphorylation at Thr-592 by CDK1 acts as a switch to control deoxynucleoside triphosphate (dNTPase)-dependent and -independent functions. Phosphorylation at Thr-592 takes place in cycling cells: it reduces the stability of the homotetramer, impairing the dNTPase activity and subsequent ability to restrict infection by viruses. It also inhibits ability to suppress LINE-1 retrotransposon activity. In contrast, phosphorylation at Thr-592 promotes DNA end resection at stalled replication forks in response to DNA damage. In terms of processing, (Microbial infection) Phosphorylation at Thr-592 by Epstein-Barr virus kinase BGLF4 and human cytomegalovirus/HCMV UL97 leads to a reduced level of dCTPase and dTTPase activity and the loss of viral restriction. Post-translationally, (Microbial infection) Ubiquitinated following interaction with HIV-2 viral protein Vpx; Vpx promotes interaction and with a DCX (DDB1-CUL4-X-box) E3 ubiquitin ligase, leading to proteasomal degradation. In terms of tissue distribution, expressed in heart, skeletal muscle, spleen, liver, small intestine, placenta, lung and peripheral blood leukocytes. No expression is seen in brain and thymus.

The protein resides in the nucleus. Its subcellular location is the chromosome. The catalysed reaction is a 2'-deoxyribonucleoside 5'-triphosphate + H2O = a 2'-deoxyribonucleoside + triphosphate + H(+). It carries out the reaction dATP + H2O = 2'-deoxyadenosine + triphosphate + H(+). It catalyses the reaction dCTP + H2O = 2'-deoxycytidine + triphosphate + H(+). The enzyme catalyses dGTP + H2O = 2'-deoxyguanosine + triphosphate + H(+). The catalysed reaction is dTTP + H2O = thymidine + triphosphate + H(+). Allosterically activated and regulated via the combined actions of GTP and dNTPs (dATP, dGTP, dTTP and dCTP): Allosteric site 1 binds GTP, while allosteric site 2 binds dNTP. Allosteric activation promotes the formation of highly active homotetramers. Phosphorylation at Thr-592 impairs homotetramerization, thereby inhibiting dNTPase activity, leading to reduced ability to restrict infection by viruses. Protein that acts both as a host restriction factor involved in defense response to virus and as a regulator of DNA end resection at stalled replication forks. Has deoxynucleoside triphosphate (dNTPase) activity, which is required to restrict infection by viruses, such as HIV-1: dNTPase activity reduces cellular dNTP levels to levels too low for retroviral reverse transcription to occur, blocking early-stage virus replication in dendritic and other myeloid cells. Likewise, suppresses LINE-1 retrotransposon activity. Not able to restrict infection by HIV-2 virus; because restriction activity is counteracted by HIV-2 viral protein Vpx. In addition to virus restriction, dNTPase activity acts as a regulator of DNA precursor pools by regulating dNTP pools. Phosphorylation at Thr-592 acts as a switch to control dNTPase-dependent and -independent functions: it inhibits dNTPase activity and ability to restrict infection by viruses, while it promotes DNA end resection at stalled replication forks. Functions during S phase at stalled DNA replication forks to promote the resection of gapped or reversed forks: acts by stimulating the exonuclease activity of MRE11, activating the ATR-CHK1 pathway and allowing the forks to restart replication. Its ability to promote degradation of nascent DNA at stalled replication forks is required to prevent induction of type I interferons, thereby preventing chronic inflammation. Ability to promote DNA end resection at stalled replication forks is independent of dNTPase activity. Enhances immunoglobulin hypermutation in B-lymphocytes by promoting transversion mutation. This Homo sapiens (Human) protein is Deoxynucleoside triphosphate triphosphohydrolase SAMHD1.